Here is a 233-residue protein sequence, read N- to C-terminus: Small ribosomal subunit protein uS2 (233 aa).

It belongs to the universal ribosomal protein uS2 family.

This chain is Small ribosomal subunit protein uS2, found in Clostridium perfringens (strain ATCC 13124 / DSM 756 / JCM 1290 / NCIMB 6125 / NCTC 8237 / Type A).